The chain runs to 237 residues: MTKQKQYVSDVNLTVCGSNKPSSTPGKDIEYFGLIPVDLFISNILSRLPLKSKAKCRCVSKLWSSIIRRPNYNQLFPIKSPAPRILFTIEYAGILFFYSSPQPHNPDENSSLVATLHQNTGNTKFYEICGPVCGRVLCRQYNSVGVIYNPITGESSNLPKLSLKGINKSEWLCDKARYSFGYDPIEKQLKVLCITWLRTGSEHLSNEYQVLTLGTENKKTLLEKDSRLCNSFFLGQY.

The region spanning I41–Y72 is the F-box domain.

The polypeptide is Probable F-box protein At1g53815 (Arabidopsis thaliana (Mouse-ear cress)).